The primary structure comprises 728 residues: E3 ubiquitin-protein ligase TRIM36 (728 aa).

The RING-type; degenerate zinc-finger motif lies at 33 to 84 (CPACKELFTHPLILPCQHSICHKCVKELLLTLDDSFNDVGSDNSNQSSPRLR). B box-type zinc fingers lie at residues 154-192 (AIMC…WGTI) and 207-249 (PKIL…VTTM). Zn(2+) is bound by residues cysteine 212, histidine 215, cysteine 235, and histidine 241. A coiled-coil region spans residues 271–345 (ESQVKSQISE…MEEYQGLLEN (75 aa)). A COS domain is found at 356–413 (LKETDQSCFVQTAKQLHLRIQKATESLKSFRPAAQTSFEDYVVNTSKQTELLGELSFF). The Fibronectin type-III domain maps to 419-510 (VPEINEEQSK…RELILHTPPA (92 aa)). The region spanning 508–720 (PPAPVFSFLF…IQLEEPITAK (213 aa)) is the B30.2/SPRY domain.

The protein belongs to the TRIM/RBCC family. In terms of assembly, interacts with CENPH. As to expression, highly expressed in testis, prostate and brain. Weakly expressed in kidney, lung and heart. Expressed in fetal tissues.

The protein resides in the cytoplasm. Its subcellular location is the cytoplasmic vesicle. It localises to the secretory vesicle. The protein localises to the acrosome. It is found in the cytoskeleton. It catalyses the reaction S-ubiquitinyl-[E2 ubiquitin-conjugating enzyme]-L-cysteine + [acceptor protein]-L-lysine = [E2 ubiquitin-conjugating enzyme]-L-cysteine + N(6)-ubiquitinyl-[acceptor protein]-L-lysine.. Its function is as follows. E3 ubiquitin-protein ligase which mediates ubiquitination and subsequent proteasomal degradation of target proteins. Involved in chromosome segregation and cell cycle regulation. May play a role in the acrosome reaction and fertilization. The chain is E3 ubiquitin-protein ligase TRIM36 (TRIM36) from Homo sapiens (Human).